Reading from the N-terminus, the 371-residue chain is MAPRSFPENPYILLTPGPLSTSPTVKAVMMRDWCTWDRDYNAIVQDIRERLVALATAGAGYTSVLMQGSGTFAVEAALGTALPHDGKLLVISNGHYGDRMALIAGYLGMRSAKLDFGETGRPDPDRVRDTIESDPAITHVAVVHCETTTGMLNPVEEIGRAVKSLGRVFIVDAMSSFGGIPMDIATLGADFLISSANKCIQGVPGFGFVIARRSELEQCAGRSRSLSLDLFQQWKEMETKGGKWRFTSPTHVVRAFAQALNELDDEGGVACRNARYRENRRILTAGMRALGFECLLPEALQSPIITSFLTPGRPGFNFNSLYQELKSRGFVIYPGKVSEADTFRIGTIGHVFPEDMHRLVKAAKDAMHRFG.

N6-(pyridoxal phosphate)lysine is present on Lys198.

Belongs to the class-V pyridoxal-phosphate-dependent aminotransferase family. PhnW subfamily. In terms of assembly, homodimer. Pyridoxal 5'-phosphate is required as a cofactor.

The catalysed reaction is (2-aminoethyl)phosphonate + pyruvate = phosphonoacetaldehyde + L-alanine. In terms of biological role, involved in phosphonate degradation. The sequence is that of 2-aminoethylphosphonate--pyruvate transaminase from Syntrophobacter fumaroxidans (strain DSM 10017 / MPOB).